Reading from the N-terminus, the 101-residue chain is CRISPR-associated endoribonuclease Cas2 (101 aa).

Asp-17 lines the Mg(2+) pocket.

This sequence belongs to the CRISPR-associated endoribonuclease Cas2 protein family. Homodimer, forms a heterotetramer with a Cas1 homodimer. It depends on Mg(2+) as a cofactor.

CRISPR (clustered regularly interspaced short palindromic repeat), is an adaptive immune system that provides protection against mobile genetic elements (viruses, transposable elements and conjugative plasmids). CRISPR clusters contain sequences complementary to antecedent mobile elements and target invading nucleic acids. CRISPR clusters are transcribed and processed into CRISPR RNA (crRNA). Functions as a ssRNA-specific endoribonuclease. Involved in the integration of spacer DNA into the CRISPR cassette. In Methanopyrus kandleri (strain AV19 / DSM 6324 / JCM 9639 / NBRC 100938), this protein is CRISPR-associated endoribonuclease Cas2.